We begin with the raw amino-acid sequence, 457 residues long: MDTNNNIEKEILALVKQNPKVSLIEYENYLSQLKYNPNASKSDIAFFYAPNKFLCTTITAKYGALLKEILSQNKVGMHLAHSVDVRIEVAPKIQVNAQSNINYKATKTSVKDSYTFENFVVGSCNNTVYEIAKKVAQSDTPPYNPVLFYGGTGLGKTHILNAIGNHALEKHKKVVLVTSEDFLTDFLKHLDNKNMDSFKKKYRHCDFFLLDDAQFLQGKPKLEEEFFHTFNELHANSKQIVLISDRSPKNIAGLEDRLKSRFEWGITAKVMPPDLETKLSIVKQKCQLNKITLPEEVMEYIAQHISDNIRQMEGAIIKISVNANLMNATIDLNLAKTVLEDLQKDHAEGSSLENILLAVAQSLNLKSSEIKVSSRQKNVALARKLVVYFARLYTPNPTLSLAQFLDLKDHSSISKMYSSVKKMLEEEKSPFILSLREEIKNRLNELNDKKTAFNSSE.

The tract at residues 1–77 is domain I, interacts with DnaA modulators; sequence MDTNNNIEKE…EILSQNKVGM (77 aa). Residues 77 to 108 form a domain II region; the sequence is MHLAHSVDVRIEVAPKIQVNAQSNINYKATKT. Positions 109–323 are domain III, AAA+ region; that stretch reads SVKDSYTFEN…GAIIKISVNA (215 aa). The ATP site is built by Gly-153, Gly-155, Lys-156, and Thr-157. The interval 324 to 457 is domain IV, binds dsDNA; sequence NLMNATIDLN…DKKTAFNSSE (134 aa).

This sequence belongs to the DnaA family. As to quaternary structure, oligomerizes as a right-handed, spiral filament on DNA at oriC.

The protein localises to the cytoplasm. Plays an essential role in the initiation and regulation of chromosomal replication. ATP-DnaA binds to the origin of replication (oriC) to initiate formation of the DNA replication initiation complex once per cell cycle. Binds the DnaA box (a 9 base pair repeat at the origin) and separates the double-stranded (ds)DNA. Forms a right-handed helical filament on oriC DNA; dsDNA binds to the exterior of the filament while single-stranded (ss)DNA is stabiized in the filament's interior. The ATP-DnaA-oriC complex binds and stabilizes one strand of the AT-rich DNA unwinding element (DUE), permitting loading of DNA polymerase. After initiation quickly degrades to an ADP-DnaA complex that is not apt for DNA replication. Binds acidic phospholipids. In Helicobacter pylori (strain J99 / ATCC 700824) (Campylobacter pylori J99), this protein is Chromosomal replication initiator protein DnaA.